The primary structure comprises 206 residues: Small ribosomal subunit protein uS4 (206 aa).

The S4 RNA-binding domain occupies 96-156 (GRLDNVVYRM…EKAKKQSRVK (61 aa)).

It belongs to the universal ribosomal protein uS4 family. In terms of assembly, part of the 30S ribosomal subunit. Contacts protein S5. The interaction surface between S4 and S5 is involved in control of translational fidelity.

In terms of biological role, one of the primary rRNA binding proteins, it binds directly to 16S rRNA where it nucleates assembly of the body of the 30S subunit. Functionally, with S5 and S12 plays an important role in translational accuracy. This chain is Small ribosomal subunit protein uS4, found in Salmonella typhi.